Reading from the N-terminus, the 542-residue chain is CTP synthase (542 aa).

The amidoligase domain stretch occupies residues 1 to 265 (MARYIFITGG…DQEVLSAFGI (265 aa)). S13 contacts CTP. S13 provides a ligand contact to UTP. 14–19 (SLGKGL) lines the ATP pocket. Residue Y54 participates in L-glutamine binding. D71 contacts ATP. The Mg(2+) site is built by D71 and E139. Residues 146–148 (DIE), 186–191 (KTKPTQ), and K222 contribute to the CTP site. Residues 186–191 (KTKPTQ) and K222 each bind UTP. ATP is bound at residue 238 to 240 (RDV). Residues 291 to 541 (TIAIVGKYTG…IAAAMEQSRL (251 aa)) form the Glutamine amidotransferase type-1 domain. G353 serves as a coordination point for L-glutamine. Residue C380 is the Nucleophile; for glutamine hydrolysis of the active site. Residues 381–384 (FGMQ), E404, and R469 each bind L-glutamine. Residues H514 and E516 contribute to the active site.

Belongs to the CTP synthase family. As to quaternary structure, homotetramer.

It catalyses the reaction UTP + L-glutamine + ATP + H2O = CTP + L-glutamate + ADP + phosphate + 2 H(+). The catalysed reaction is L-glutamine + H2O = L-glutamate + NH4(+). The enzyme catalyses UTP + NH4(+) + ATP = CTP + ADP + phosphate + 2 H(+). It functions in the pathway pyrimidine metabolism; CTP biosynthesis via de novo pathway; CTP from UDP: step 2/2. With respect to regulation, allosterically activated by GTP, when glutamine is the substrate; GTP has no effect on the reaction when ammonia is the substrate. The allosteric effector GTP functions by stabilizing the protein conformation that binds the tetrahedral intermediate(s) formed during glutamine hydrolysis. Inhibited by the product CTP, via allosteric rather than competitive inhibition. Its function is as follows. Catalyzes the ATP-dependent amination of UTP to CTP with either L-glutamine or ammonia as the source of nitrogen. Regulates intracellular CTP levels through interactions with the four ribonucleotide triphosphates. The polypeptide is CTP synthase (Beijerinckia indica subsp. indica (strain ATCC 9039 / DSM 1715 / NCIMB 8712)).